The primary structure comprises 322 residues: Mitochondrial glutamate carrier 1 (322 aa).

Solcar repeat units follow at residues 6 to 93, 101 to 214, and 223 to 312; these read ISLP…FRYQ, LTLF…LNEL, and SPFY…GIAE. Helical transmembrane passes span 12-32, 62-82, 107-127, 189-209, 223-243, and 292-312; these read LINGGIAGLIGVTCVFPIDLA, YFGMYRGAAVNLTLVTPEKAI, MLAGCGAGTCQVIVTTPMEML, GLGATLLRDVPFSIVYFPLFA, SPFYVSFLAGCVAGSAAAVAV, and ALVIAPLFGIAQVVYFLGIAE.

This sequence belongs to the mitochondrial carrier (TC 2.A.29) family.

It is found in the mitochondrion inner membrane. It carries out the reaction L-glutamate(in) + H(+)(in) = L-glutamate(out) + H(+)(out). Functionally, mitochondrial glutamate/H(+) symporter. Responsible for the transport of glutamate from the cytosol into the mitochondrial matrix with the concomitant import of a proton. Plays a role in the control of glucose-stimulated insulin secretion. The protein is Mitochondrial glutamate carrier 1 (SLC25A22) of Bos taurus (Bovine).